The sequence spans 266 residues: MHVNGKVALVTGAAQGIGRAFAEALLLKGAKVALVDWNLEAGVQCKAALDEKFEPQKTLFIQCDVADQQQLRDTFRKVVDHFGRLDILVNNAGVNNEKNWEKTLQINLVSVISGTYLGLDYMSKQNGGEGGIIINMSSLAGLMPVAQQPVYCASKHGIVGFTRSAALAANLMNSGVRLNAICPGFVNTAILESIEKEENMGQYIEYKDHIKDMIKYYGILDPPLIANGLITLIEDDALNGAIMKITTSKGIHFQDYDATPFQAKSQ.

NAD(+)-binding positions include 12-20 (GAAQGIGRA), 36-37 (DW), 63-65 (CDV), and asparagine 91. Serine 138 and glutamine 148 together coordinate substrate. Catalysis depends on tyrosine 151, which acts as the Proton acceptor. Residues 151 to 155 (YCASK) and 186 to 188 (VNT) contribute to the NAD(+) site.

This sequence belongs to the short-chain dehydrogenases/reductases (SDR) family. In terms of assembly, homodimer.

The protein resides in the cytoplasm. The enzyme catalyses prostaglandin E2 + NAD(+) = 15-oxoprostaglandin E2 + NADH + H(+). It carries out the reaction (15S)-hydroxy-(5Z,8Z,11Z,13E)-eicosatetraenoate + NAD(+) = 15-oxo-(5Z,8Z,11Z,13E)-eicosatetraenoate + NADH + H(+). The catalysed reaction is (11R)-hydroxy-(5Z,8Z,12E,14Z)-eicosatetraenoate + NAD(+) = 11-oxo-(5Z,8Z,12E,14Z)-eicosatetraenoate + NADH + H(+). It catalyses the reaction lipoxin A4 + NAD(+) = 15-oxo-(5S,6R)-dihydroxy-(7E,9E,11Z,13E)-eicosatetraenoate + NADH + H(+). The enzyme catalyses 15-oxo-(5S,6R)-dihydroxy-(7E,9E,11Z)-eicosatrienoate + NADH + H(+) = (5S,6R,15S)-trihydroxy-(7E,9E,11Z)-eicosatrienoate + NAD(+). It carries out the reaction prostaglandin A1 + NAD(+) = 15-oxo-prostaglandin A1 + NADH + H(+). The catalysed reaction is prostaglandin E1 + NAD(+) = 15-oxoprostaglandin E1 + NADH + H(+). It catalyses the reaction 14-hydroxy-(4Z,7Z,10Z,12E,16Z,19Z)-docosahexaenoate + NAD(+) = 14-oxo-(4Z,7Z,10Z,12E,16Z,19Z)-docosahexaenoate + NADH + H(+). The enzyme catalyses resolvin E1 + NAD(+) = 18-oxo-resolvin E1 + NADH + H(+). It carries out the reaction resolvin D1 + NAD(+) = 8-oxoresolvin D1 + NADH + H(+). The catalysed reaction is resolvin D1 + NAD(+) = 17-oxoresolvin D1 + NADH + H(+). It catalyses the reaction resolvin D2 + NAD(+) = 7-oxoresolvin D2 + NADH + H(+). The enzyme catalyses resolvin D2 + NAD(+) = 16-oxoresolvin D2 + NADH + H(+). Functionally, catalyzes the NAD-dependent dehydrogenation (oxidation) of a broad array of hydroxylated polyunsaturated fatty acids (mainly eicosanoids and docosanoids, including prostaglandins, lipoxins and resolvins), yielding their corresponding keto (oxo) metabolites. Decreases the levels of the pro-proliferative prostaglandins such as prostaglandin E2 (whose activity is increased in cancer because of an increase in the expression of cyclooxygenase 2) and generates oxo-fatty acid products that can profoundly influence cell function by abrogating pro-inflammatory cytokine expression. Converts resolvins E1, D1 and D2 to their oxo products, which represents a mode of resolvin inactivation. Resolvin E1 plays important roles during the resolution phase of acute inflammation, while resolvins D1 and D2 have a unique role in obesity-induced adipose inflammation. The sequence is that of 15-hydroxyprostaglandin dehydrogenase [NAD(+)] (HPGD) from Macaca fascicularis (Crab-eating macaque).